Here is a 259-residue protein sequence, read N- to C-terminus: Chaplin-C (259 aa).

Residues 1–28 form the signal peptide; the sequence is MRQATRKGLMTMAAATGVIAAAGGAAHA. The 41-residue stretch at 39–79 folds into the Chaplin 1 domain; that stretch reads SPGVLSGNTVQAPVHVPVNVCGNTVDVVGVLNPAMGNACAN. Residues 84 to 112 are compositionally biased toward gly residues; the sequence is ASGGHGGHGGHGGYGDSGGEGGSHGGSHA. Disordered stretches follow at residues 84–129 and 154–227; these read ASGG…NHVE and GNDC…ALAE. The region spanning 119–159 is the Chaplin 2 domain; sequence SPGVGSGNHVEVPIDVPVNVCGNSIDVVGALNPTTGNDCGN. Low complexity predominate over residues 180-189; it reads HNPGNPGNPD. Positions 225–229 match the LPXTG sorting signal motif; that stretch reads LAETG. T228 carries the pentaglycyl murein peptidoglycan amidated threonine modification. A propeptide spans 229 to 259 (removed by sortase); the sequence is GSDLPLGLALPVGAGALLAGTVLYRKARASV.

It belongs to the chaplin family. Long chaplin subfamily.

It is found in the secreted. The protein resides in the cell wall. In terms of biological role, one of 8 partially redundant surface-active proteins required for efficient formation of aerial mycelium; the short chaplins assemble into a hydrophobic, amyloidal fibrillar surface layer that envelopes and protects aerial hyphae and spores, presumably anchored to the long chaplins. Chaplins have an overlapping function with the surface-active SapB peptide; chaplins are essential on minimal medium while on rich medium both chaplins and SapB are required for efficient aerial hyphae formation. A minimal chaplin strain capable of forming aerial mycelium/hyphae on minimal medium contains ChpC, ChpE and ChpH. The strain also has restored rodlet formation on the hyphae surface. The long chaplins (ChpA, ChpB, ChpC) are not absolutely necessary for short chaplin localization or rodlet formation, but probably play a role in initiating aerial hyphae development. Chaplins are also involved in cell attachment to a hydrophobic surface. This Streptomyces coelicolor (strain ATCC BAA-471 / A3(2) / M145) protein is Chaplin-C.